A 194-amino-acid chain; its full sequence is Ubiquitin-conjugating enzyme E2 T (194 aa).

The UBC core domain occupies 2 to 152; it reads QRVSRLKREM…AKKWTAEHAI (151 aa). C86 acts as the Glycyl thioester intermediate in catalysis. Composition is skewed to basic and acidic residues over residues 158–170 and 185–194; these read CVET…ENKN and NLEHTKKVCL. The interval 158-194 is disordered; that stretch reads CVETDGKTPENKNLKTSHKREALSAQENLEHTKKVCL.

This sequence belongs to the ubiquitin-conjugating enzyme family.

It localises to the nucleus. The catalysed reaction is S-ubiquitinyl-[E1 ubiquitin-activating enzyme]-L-cysteine + [E2 ubiquitin-conjugating enzyme]-L-cysteine = [E1 ubiquitin-activating enzyme]-L-cysteine + S-ubiquitinyl-[E2 ubiquitin-conjugating enzyme]-L-cysteine.. The protein operates within protein modification; protein ubiquitination. Its function is as follows. Accepts ubiquitin from the E1 complex and catalyzes its covalent attachment to other proteins. Catalyzes monoubiquitination. Involved in DNA repair. This is Ubiquitin-conjugating enzyme E2 T (ube2t) from Danio rerio (Zebrafish).